The chain runs to 160 residues: UPF0262 protein BCAN_A0255 (160 aa).

This sequence belongs to the UPF0262 family.

In Brucella canis (strain ATCC 23365 / NCTC 10854 / RM-666), this protein is UPF0262 protein BCAN_A0255.